A 433-amino-acid polypeptide reads, in one-letter code: MTTLDKNIVQINGPVNIARLEGQINGFNKVVYLFMDHHIPVQFQTECDNIFARDVQTFLAESFRNIGETGLMYDFFIEERPESIINEDSKTTNSRKEGYIWEVVKMFNKVFKFDPKENKVMSSNVFENVRFHYADIREYIYLDTLNLYNDIRNLLQEMQENNFMDPYILEHIVNILSNIFEKNKSVIDIMNSFEKNSEANSVNKITPLKYPKVYEDTNIPLTNKEPNKDASTLEKQKNLRTDYLKYFLNKLYNSYKDKNIKSKLLLELRQLKNNITNLQNKITKTMDNVKKIIEEIEQSKNKVTLTDYSFFMGISPLETRIYIANLINQISILATANIIENIGFMDIFFLRRFLDKDYITNAIIYSGSLHSANYMKILVKEFDFKVTHISKSQYPIDKLNDSIKERNNLAEIVYLAGSYTQCSDITNFPKNFQ.

The stretch at Lys-258–Thr-304 forms a coiled coil.

Belongs to the mimivirus R160 family.

The protein localises to the virion. This is an uncharacterized protein from Acanthamoeba polyphaga mimivirus (APMV).